The following is a 148-amino-acid chain: Snaclec flavocetin-A subunit beta (148 aa).

An N-terminal signal peptide occupies residues 1–23 (MGQFIFVSFGFLVVATSLSGTEA). 3 cysteine pairs are disulfide-bonded: Cys27/Cys38, Cys55/Cys144, and Cys121/Cys136. Residues 34–145 (YDEHCYQVFQ…CSSKRYVVCK (112 aa)) enclose the C-type lectin domain.

Belongs to the snaclec family. Tetramer of heterodimers of alpha and beta subunits (alphabeta)(4); disulfide-linked. Expressed by the venom gland.

Its subcellular location is the secreted. Its function is as follows. Strong platelet aggregation inhibitor. Binds specifically to platelet glycoprotein Ibalpha (GP1BA) with high affinity and inhibits vWF-dependent platelet aggregation. Has also been observed to induce small agglutinates in washed platelets by binding to GPIb. The sequence is that of Snaclec flavocetin-A subunit beta from Protobothrops flavoviridis (Habu).